The chain runs to 430 residues: Replication factor C large subunit (430 aa).

75 to 82 (GPPGTGKT) lines the ATP pocket.

This sequence belongs to the activator 1 small subunits family. RfcL subfamily. In terms of assembly, heteromultimer composed of small subunits (RfcS) and large subunits (RfcL).

Part of the RFC clamp loader complex which loads the PCNA sliding clamp onto DNA. The polypeptide is Replication factor C large subunit (Nanoarchaeum equitans (strain Kin4-M)).